We begin with the raw amino-acid sequence, 1111 residues long: ATP-dependent DNA helicase mph1 (1111 aa).

Acidic residues-rich tracts occupy residues 1–18 (MSVS…EIDD) and 47–65 (VFDE…DEFQ). Disordered stretches follow at residues 1 to 81 (MSVS…EDVE), 101 to 144 (FVTQ…HQPD), 210 to 240 (AFDS…RTNR), and 259 to 280 (IPSQ…PTHH). Composition is skewed to polar residues over residues 132–143 (PTTTTVDASHQP) and 215–238 (LSLS…QFRT). A Helicase ATP-binding domain is found at 306–474 (IAQRGLFHNL…AVIDGLGIAK (169 aa)). Residue 319 to 326 (LPTGLGKT) coordinates ATP. The DEAH box signature appears at 422-425 (DEAH). One can recognise a Helicase C-terminal domain in the interval 644 to 818 (YLKQVVLNHF…GTRFTFHDDT (175 aa)). Disordered stretches follow at residues 836-898 (IDIP…RKPT), 998-1047 (SVLS…CTPE), and 1092-1111 (AERH…DTEE). Residues 852-864 (KRARPPKRPPKKF) are compositionally biased toward basic residues.

The protein belongs to the DEAD box helicase family. DEAH subfamily. FANCM sub-subfamily. As to quaternary structure, interacts with the MHF histone-fold complex to form the FANCM-MHF complex.

It is found in the nucleus. The catalysed reaction is ATP + H2O = ADP + phosphate + H(+). In terms of biological role, ATP-dependent DNA helicase involved in DNA damage repair by homologous recombination and in genome maintenance. Capable of unwinding D-loops. Plays a role in limiting crossover recombinants during mitotic DNA double-strand break (DSB) repair. Component of a FANCM-MHF complex which promotes gene conversion at blocked replication forks, probably by reversal of the stalled fork. The sequence is that of ATP-dependent DNA helicase mph1 from Neosartorya fischeri (strain ATCC 1020 / DSM 3700 / CBS 544.65 / FGSC A1164 / JCM 1740 / NRRL 181 / WB 181) (Aspergillus fischerianus).